Reading from the N-terminus, the 198-residue chain is Small ribosomal subunit protein eS1 (198 aa).

This sequence belongs to the eukaryotic ribosomal protein eS1 family.

This Methanosphaerula palustris (strain ATCC BAA-1556 / DSM 19958 / E1-9c) protein is Small ribosomal subunit protein eS1.